Consider the following 76-residue polypeptide: Large ribosomal subunit protein eL20 (76 aa).

This sequence belongs to the eukaryotic ribosomal protein eL20 family. As to quaternary structure, part of the 50S ribosomal subunit. Binds 23S rRNA.

The polypeptide is Large ribosomal subunit protein eL20 (Methanococcus maripaludis (strain C7 / ATCC BAA-1331)).